The chain runs to 97 residues: Sugar transporter SemiSWEET (97 aa).

The PQ-loop domain maps to 4–70 (IERIGKALEP…IYGIYHKNPT (67 aa)). A run of 3 helical transmembrane segments spans residues 15-35 (MLVMGLISPLATMPQLYKLYV), 44-65 (LSLTTWLLYSFIALLWTIYGIY), and 71-91 (IWVGNCLGFLMYVAMVVGIIA).

As to quaternary structure, homodimer.

It is found in the cell membrane. Functionally, the homodimer mediates transmembrane sugar transport down a concentration gradient. Transport is probably effected by rocking-type movements, where a cargo-binding cavity opens first on one and then on the other side of the membrane. In Vibrio sp. (strain N418), this protein is Sugar transporter SemiSWEET.